The primary structure comprises 130 residues: MAKTAKKSGPKKAKRNVPNGVAHIQSTFNNTIVSISDTAGEIIAWSSAGASGFKGARKGTPFAAQTAAEAAARRALEQGMRQIEVLVRGPGSGRETAIRALQVAGLEITLIRDVTPLPHNGCRRPKRRRV.

The protein belongs to the universal ribosomal protein uS11 family. As to quaternary structure, part of the 30S ribosomal subunit. Interacts with proteins S7 and S18. Binds to IF-3.

Its function is as follows. Located on the platform of the 30S subunit, it bridges several disparate RNA helices of the 16S rRNA. Forms part of the Shine-Dalgarno cleft in the 70S ribosome. This Synechococcus sp. (strain CC9902) protein is Small ribosomal subunit protein uS11.